Reading from the N-terminus, the 74-residue chain is Translation initiation factor IF-1 (74 aa).

The S1-like domain maps to 1–72 (MSKQDLIEME…TKGRITYRLR (72 aa)).

It belongs to the IF-1 family. In terms of assembly, component of the 30S ribosomal translation pre-initiation complex which assembles on the 30S ribosome in the order IF-2 and IF-3, IF-1 and N-formylmethionyl-tRNA(fMet); mRNA recruitment can occur at any time during PIC assembly.

Its subcellular location is the cytoplasm. One of the essential components for the initiation of protein synthesis. Stabilizes the binding of IF-2 and IF-3 on the 30S subunit to which N-formylmethionyl-tRNA(fMet) subsequently binds. Helps modulate mRNA selection, yielding the 30S pre-initiation complex (PIC). Upon addition of the 50S ribosomal subunit IF-1, IF-2 and IF-3 are released leaving the mature 70S translation initiation complex. The chain is Translation initiation factor IF-1 from Trichodesmium erythraeum (strain IMS101).